The chain runs to 31 residues: Photosystem II reaction center protein T (31 aa).

The helical transmembrane segment at 3 to 23 threads the bilayer; that stretch reads AFSYVLILTLALVTLFFAVAF.

Belongs to the PsbT family. As to quaternary structure, PSII is composed of 1 copy each of membrane proteins PsbA, PsbB, PsbC, PsbD, PsbE, PsbF, PsbH, PsbI, PsbJ, PsbK, PsbL, PsbM, PsbT, PsbX, PsbY, Psb30/Ycf12, peripheral proteins PsbO, CyanoQ (PsbQ), PsbU, PsbV and a large number of cofactors. It forms dimeric complexes.

The protein resides in the cellular thylakoid membrane. Found at the monomer-monomer interface of the photosystem II (PS II) dimer, plays a role in assembly and dimerization of PSII. PSII is a light-driven water plastoquinone oxidoreductase, using light energy to abstract electrons from H(2)O, generating a proton gradient subsequently used for ATP formation. This chain is Photosystem II reaction center protein T, found in Prochlorococcus marinus (strain NATL2A).